Consider the following 385-residue polypeptide: Glucans biosynthesis protein C (385 aa).

Helical transmembrane passes span 17–37, 60–80, 91–111, 137–157, 173–193, 212–232, 239–259, 274–294, 311–331, and 338–358; these read AWLM…SHTW, MQVF…RYPL, VGIP…IMLQ, ISHL…VWIF, KFSM…YAVI, FIVM…LAFI, LFTT…VAYL, TESV…FSFG, ASLF…AYIT, and WLGF…LYEI.

It belongs to the acyltransferase 3 family. OpgC subfamily.

Its subcellular location is the cell membrane. Its pathway is glycan metabolism; osmoregulated periplasmic glucan (OPG) biosynthesis. Its function is as follows. Necessary for the succinyl substitution of periplasmic glucans. Could catalyze the transfer of succinyl residues from the cytoplasmic side of the membrane to the nascent glucan backbones on the periplasmic side of the membrane. The protein is Glucans biosynthesis protein C of Escherichia coli O45:K1 (strain S88 / ExPEC).